A 257-amino-acid polypeptide reads, in one-letter code: 3-deoxy-manno-octulosonate cytidylyltransferase (257 aa).

Belongs to the KdsB family.

Its subcellular location is the cytoplasm. It catalyses the reaction 3-deoxy-alpha-D-manno-oct-2-ulosonate + CTP = CMP-3-deoxy-beta-D-manno-octulosonate + diphosphate. It participates in nucleotide-sugar biosynthesis; CMP-3-deoxy-D-manno-octulosonate biosynthesis; CMP-3-deoxy-D-manno-octulosonate from 3-deoxy-D-manno-octulosonate and CTP: step 1/1. Its pathway is bacterial outer membrane biogenesis; lipopolysaccharide biosynthesis. Functionally, activates KDO (a required 8-carbon sugar) for incorporation into bacterial lipopolysaccharide in Gram-negative bacteria. In Xylella fastidiosa (strain M12), this protein is 3-deoxy-manno-octulosonate cytidylyltransferase.